A 209-amino-acid chain; its full sequence is Pyridoxine/pyridoxamine 5'-phosphate oxidase (209 aa).

Residues 7 to 10 (RADY) and lysine 64 each bind substrate. Residues 59–64 (RIVLLK), 74–75 (FT), and lysine 81 contribute to the FMN site. Residues tyrosine 121, arginine 125, and serine 129 each coordinate substrate. Residues 138 to 139 (QS), tryptophan 182, and arginine 192 contribute to the FMN site.

Belongs to the pyridoxamine 5'-phosphate oxidase family. Homodimer. FMN is required as a cofactor.

It carries out the reaction pyridoxamine 5'-phosphate + O2 + H2O = pyridoxal 5'-phosphate + H2O2 + NH4(+). It catalyses the reaction pyridoxine 5'-phosphate + O2 = pyridoxal 5'-phosphate + H2O2. It functions in the pathway cofactor metabolism; pyridoxal 5'-phosphate salvage; pyridoxal 5'-phosphate from pyridoxamine 5'-phosphate: step 1/1. The protein operates within cofactor metabolism; pyridoxal 5'-phosphate salvage; pyridoxal 5'-phosphate from pyridoxine 5'-phosphate: step 1/1. Catalyzes the oxidation of either pyridoxine 5'-phosphate (PNP) or pyridoxamine 5'-phosphate (PMP) into pyridoxal 5'-phosphate (PLP). The chain is Pyridoxine/pyridoxamine 5'-phosphate oxidase from Haemophilus ducreyi (strain 35000HP / ATCC 700724).